Reading from the N-terminus, the 253-residue chain is Probable transcriptional regulatory protein KRH_13670 (253 aa).

Belongs to the TACO1 family.

The protein localises to the cytoplasm. This chain is Probable transcriptional regulatory protein KRH_13670, found in Kocuria rhizophila (strain ATCC 9341 / DSM 348 / NBRC 103217 / DC2201).